Consider the following 556-residue polypeptide: Membrane protein insertase YidC (556 aa).

A helical membrane pass occupies residues 7–27 (ILLVALAVVAYLMVLQWNQDY). Disordered regions lie at residues 35–59 (ETAQ…GNAN) and 126–152 (SSER…PQYS). A compositionally biased stretch (low complexity) spans 36–54 (TAQSQPAAPALPDSPSATT). The next 4 helical transmembrane spans lie at 365-385 (LLGN…LAFF), 435-455 (LGGC…YWVL), 468-488 (FWIT…IMGV), and 513-533 (PIIF…YWVV).

Belongs to the OXA1/ALB3/YidC family. Type 1 subfamily. As to quaternary structure, interacts with the Sec translocase complex via SecD. Specifically interacts with transmembrane segments of nascent integral membrane proteins during membrane integration.

The protein localises to the cell inner membrane. Functionally, required for the insertion and/or proper folding and/or complex formation of integral membrane proteins into the membrane. Involved in integration of membrane proteins that insert both dependently and independently of the Sec translocase complex, as well as at least some lipoproteins. Aids folding of multispanning membrane proteins. This Stutzerimonas stutzeri (strain A1501) (Pseudomonas stutzeri) protein is Membrane protein insertase YidC.